A 607-amino-acid chain; its full sequence is MATEKGDQNAEKIEQSLPQKIPYWRLVVDQGVLTQQIIDYPYKGSGTEEDPYEVVWMENDPRNPMTWTQLRKWSLTMTVAVSTLAVALVSSAYTGGVREIEAEFHIGSEVATLGVSLFVLGFAIGPLLWAPLSEMFGRQIIFTVTYCALTAFNAGSAGAQNSWTLIILRFFAGAFGASPLTNAGGVIADMFHAKQRGIAMSLFAAAPFLGPVLGPIIGGFLGMNAGWRWVMGFLGAFSGAVWIICTIFVPETYAPVLLRRRAEKLSKHTGKVYVSKIDIDQGRVTLKDAFKTALSRPWILLFKEPIVFLLSLYMAIIYGTLYMLFSAYPIVFQGVRHWNQGVSSLPFLGIMVGMMFAVTYSVWDNKRYVQVQAKHGGFAPPEARLPPTLIASVAIPIGLFWFAWTNYPSIHWIVCILAGAPFGFGMVLVFLGIMNYLIDAYTIFAASVLAANSVLRSIFGAVFPLFTTYMYEDLGIHWASSIPAFLALACVPFPFLFYKYGATIRKRCEYAAKSDAFMRKLAEQMKQAPEPESEETEEPVFDRTEAPAPDVSDVSETESNVEELPDVRQMRSRASTRTASSLRRVVSYEGNPYDIDRVNTRESFTKK.

A run of 12 helical transmembrane segments spans residues 77 to 97, 110 to 130, 139 to 159, 170 to 190, 202 to 222, 229 to 249, 305 to 325, 342 to 362, 385 to 405, 413 to 433, 443 to 463, and 478 to 498; these read MTVAVSTLAVALVSSAYTGGV, VATLGVSLFVLGFAIGPLLWA, QIIFTVTYCALTAFNAGSAGA, FFAGAFGASPLTNAGGVIADM, LFAAAPFLGPVLGPIIGGFLG, WVMGFLGAFSGAVWIICTIFV, PIVFLLSLYMAIIYGTLYMLF, VSSLPFLGIMVGMMFAVTYSV, LPPTLIASVAIPIGLFWFAWT, IVCILAGAPFGFGMVLVFLGI, IFAASVLAANSVLRSIFGAVF, and WASSIPAFLALACVPFPFLFY. Positions 523–583 are disordered; that stretch reads EQMKQAPEPE…ASTRTASSLR (61 aa). Positions 553 to 564 are enriched in acidic residues; the sequence is DVSETESNVEEL. Over residues 572–583 the composition is skewed to low complexity; that stretch reads SRASTRTASSLR.

It belongs to the major facilitator superfamily. DHA1 family. Polyamines/proton antiporter (TC 2.A.1.2.16) subfamily.

Its subcellular location is the cell membrane. Its function is as follows. MFS transporter involved in the basal level of azole susceptibility. Confers resistance to voriconazole and, to a lesser extent, to fluconazole. The protein is Major facilitator superfamily multidrug transporter mdrA of Aspergillus fumigatus (strain ATCC MYA-4609 / CBS 101355 / FGSC A1100 / Af293) (Neosartorya fumigata).